Consider the following 165-residue polypeptide: Phosphopantetheine adenylyltransferase (165 aa).

Serine 11 is a substrate binding site. Residues 11–12 (SF) and histidine 19 each bind ATP. The substrate site is built by lysine 43, threonine 76, and arginine 90. ATP is bound by residues 91–93 (GIR), glutamate 101, and 126–132 (FSFISSS).

It belongs to the bacterial CoaD family. Homohexamer. Mg(2+) is required as a cofactor.

The protein resides in the cytoplasm. It catalyses the reaction (R)-4'-phosphopantetheine + ATP + H(+) = 3'-dephospho-CoA + diphosphate. The protein operates within cofactor biosynthesis; coenzyme A biosynthesis; CoA from (R)-pantothenate: step 4/5. Its function is as follows. Reversibly transfers an adenylyl group from ATP to 4'-phosphopantetheine, yielding dephospho-CoA (dPCoA) and pyrophosphate. The protein is Phosphopantetheine adenylyltransferase of Latilactobacillus sakei subsp. sakei (strain 23K) (Lactobacillus sakei subsp. sakei).